The following is a 264-amino-acid chain: Thiazole synthase (264 aa).

Lys-106 serves as the catalytic Schiff-base intermediate with DXP. 1-deoxy-D-xylulose 5-phosphate-binding positions include Gly-167, 193–194 (AG), and 215–216 (NS).

The protein belongs to the ThiG family. As to quaternary structure, homotetramer. Forms heterodimers with either ThiH or ThiS.

The protein localises to the cytoplasm. It catalyses the reaction [ThiS sulfur-carrier protein]-C-terminal-Gly-aminoethanethioate + 2-iminoacetate + 1-deoxy-D-xylulose 5-phosphate = [ThiS sulfur-carrier protein]-C-terminal Gly-Gly + 2-[(2R,5Z)-2-carboxy-4-methylthiazol-5(2H)-ylidene]ethyl phosphate + 2 H2O + H(+). It functions in the pathway cofactor biosynthesis; thiamine diphosphate biosynthesis. Catalyzes the rearrangement of 1-deoxy-D-xylulose 5-phosphate (DXP) to produce the thiazole phosphate moiety of thiamine. Sulfur is provided by the thiocarboxylate moiety of the carrier protein ThiS. In vitro, sulfur can be provided by H(2)S. In Pseudomonas putida (strain W619), this protein is Thiazole synthase.